Consider the following 182-residue polypeptide: Probable peptidyl-prolyl cis-trans isomerase A (182 aa).

The PPIase cyclophilin-type domain maps to 13–181 (ATATATLHTN…DPVVIESITI (169 aa)).

The protein belongs to the cyclophilin-type PPIase family.

The protein resides in the cytoplasm. The enzyme catalyses [protein]-peptidylproline (omega=180) = [protein]-peptidylproline (omega=0). Functionally, PPIases accelerate the folding of proteins. It catalyzes the cis-trans isomerization of proline imidic peptide bonds in oligopeptides. In Mycobacterium bovis (strain ATCC BAA-935 / AF2122/97), this protein is Probable peptidyl-prolyl cis-trans isomerase A (ppiA).